A 183-amino-acid chain; its full sequence is MTETTTKKRWYVLQAFSGFEGRVATTLREYIKLHQMEDQFGEVLVPTEEVVENVAGKRRKSERKFFPGYVLVQMEMNDETWHLVRSVPRVMGFIGGTADKPAPISQREADRILNRLQESSEKPRHRKEFQPGEEVRVTEGPFADFNGTVEEVDYEKGRLKVSVSIFGRATPVELEFSQVEKTN.

Residues 131-161 (PGEEVRVTEGPFADFNGTVEEVDYEKGRLKV) form the KOW domain.

The protein belongs to the NusG family.

Participates in transcription elongation, termination and antitermination. In Pasteurella multocida (strain Pm70), this protein is Transcription termination/antitermination protein NusG.